A 144-amino-acid chain; its full sequence is Transcription antitermination protein NusB (144 aa).

This sequence belongs to the NusB family.

Involved in transcription antitermination. Required for transcription of ribosomal RNA (rRNA) genes. Binds specifically to the boxA antiterminator sequence of the ribosomal RNA (rrn) operons. This Leifsonia xyli subsp. xyli (strain CTCB07) protein is Transcription antitermination protein NusB.